The primary structure comprises 797 residues: Methionine--tRNA ligase, cytoplasmic (797 aa).

The short motif at 26-36 is the 'HIGH' region element; that stretch reads PYVNNVPHLGN. Residues 348 to 352 carry the 'KMSKS' region motif; sequence KFSKS. K351 lines the ATP pocket. Residues 601–634 are disordered; sequence DQLNKTKLSDAKKQKASSKGGGKPKPQPAADREI. Residues 635 to 738 form the tRNA-binding domain; the sequence is TMARLDIRVG…KTANIGERVT (104 aa).

It belongs to the class-I aminoacyl-tRNA synthetase family.

It is found in the cytoplasm. Its subcellular location is the cytosol. The enzyme catalyses tRNA(Met) + L-methionine + ATP = L-methionyl-tRNA(Met) + AMP + diphosphate. This is Methionine--tRNA ligase, cytoplasmic from Arabidopsis thaliana (Mouse-ear cress).